Reading from the N-terminus, the 192-residue chain is Elongation factor P (192 aa).

This sequence belongs to the elongation factor P family.

The protein resides in the cytoplasm. It participates in protein biosynthesis; polypeptide chain elongation. Its function is as follows. Involved in peptide bond synthesis. Stimulates efficient translation and peptide-bond synthesis on native or reconstituted 70S ribosomes in vitro. Probably functions indirectly by altering the affinity of the ribosome for aminoacyl-tRNA, thus increasing their reactivity as acceptors for peptidyl transferase. The chain is Elongation factor P (efp) from Borreliella burgdorferi (strain ATCC 35210 / DSM 4680 / CIP 102532 / B31) (Borrelia burgdorferi).